The chain runs to 28 residues: Conotoxin de7b (28 aa).

Intrachain disulfides connect Cys2–Cys18, Cys9–Cys22, and Cys17–Cys27. At Pro4 the chain carries 4-hydroxyproline; partial. Glu7 carries the 4-carboxyglutamate; partial modification. The residue at position 14 (Pro14) is a 4-hydroxyproline; partial.

As to expression, expressed by the venom duct.

The protein resides in the secreted. May inhibit sodium (Nav) or calcium channels (Cav). This is Conotoxin de7b from Conasprella delessertii (Sozon's cone).